The sequence spans 146 residues: 3-dehydroquinate dehydratase (146 aa).

The active-site Proton acceptor is Y22. Substrate contacts are provided by N74, H80, and D87. Residue H100 is the Proton donor of the active site. Substrate-binding positions include 101–102 and R111; that span reads LS.

Belongs to the type-II 3-dehydroquinase family. In terms of assembly, homododecamer.

It carries out the reaction 3-dehydroquinate = 3-dehydroshikimate + H2O. Its pathway is metabolic intermediate biosynthesis; chorismate biosynthesis; chorismate from D-erythrose 4-phosphate and phosphoenolpyruvate: step 3/7. Catalyzes a trans-dehydration via an enolate intermediate. The sequence is that of 3-dehydroquinate dehydratase from Clostridium perfringens (strain SM101 / Type A).